We begin with the raw amino-acid sequence, 1059 residues long: Isoleucine--tRNA ligase (1059 aa).

Positions Pro-59 to His-69 match the 'HIGH' region motif. The 'KMSKS' region signature appears at Lys-637–Ser-641. Lys-640 is a binding site for ATP.

This sequence belongs to the class-I aminoacyl-tRNA synthetase family. IleS type 2 subfamily. Monomer. Zn(2+) serves as cofactor.

It localises to the cytoplasm. The catalysed reaction is tRNA(Ile) + L-isoleucine + ATP = L-isoleucyl-tRNA(Ile) + AMP + diphosphate. Its function is as follows. Catalyzes the attachment of isoleucine to tRNA(Ile). As IleRS can inadvertently accommodate and process structurally similar amino acids such as valine, to avoid such errors it has two additional distinct tRNA(Ile)-dependent editing activities. One activity is designated as 'pretransfer' editing and involves the hydrolysis of activated Val-AMP. The other activity is designated 'posttransfer' editing and involves deacylation of mischarged Val-tRNA(Ile). The sequence is that of Isoleucine--tRNA ligase from Mycobacterium leprae (strain TN).